A 116-amino-acid polypeptide reads, in one-letter code: Small ribosomal subunit protein uS8c (116 aa).

Belongs to the universal ribosomal protein uS8 family. As to quaternary structure, part of the 30S ribosomal subunit.

The protein resides in the plastid. It localises to the chloroplast. Functionally, one of the primary rRNA binding proteins, it binds directly to 16S rRNA central domain where it helps coordinate assembly of the platform of the 30S subunit. This is Small ribosomal subunit protein uS8c (rps8) from Musa acuminata (Banana).